Here is a 401-residue protein sequence, read N- to C-terminus: Secreted LysM effector Blys8 (401 aa).

Positions 1 to 19 (MRTLAIFFIGAAVAAHVSP) are cleaved as a signal peptide. The region spanning 42-89 (TYYDEAYDKSYTCDDLLSAWVISKQDFESWNPAVGSDCKLVLGHSYCV) is the LysM 1 domain. Residues 98–136 (STTTTTTTSTTTKTTTKTTTTTTAAPKPTSSAPSGPSPT) show a composition bias toward low complexity. The tract at residues 98 to 137 (STTTTTTTSTTTKTTTKTTTTTTAAPKPTSSAPSGPSPTQ) is disordered. The 48-residue stretch at 146-193 (AYYFVKAGDTCDKISQMYGTFSTAQFIEWNPAVGSSCTGLWAGYYYCV) folds into the LysM 2 domain. The segment at 201 to 223 (SRTSTAGPTSTKPANGVTTPQPT) is disordered. The region spanning 233–279 (QFVYVQPGDQCGTVASRAGVSLSDFLQWNPSTGKDCSGLWANAYACV) is the LysM 3 domain.

It belongs to the secreted LysM effector family.

Might have a role in sequestration of chitin oligosaccharides (breakdown products of fungal cell walls that are released during invasion and act as triggers of host immunity) to dampen host defense. The sequence is that of Secreted LysM effector Blys8 from Beauveria bassiana (strain ARSEF 2860) (White muscardine disease fungus).